Here is a 569-residue protein sequence, read N- to C-terminus: Urease subunit alpha (569 aa).

Residues 131–569 (GGIDTHIHFI…LPLAQRYLLL (439 aa)) enclose the Urease domain. Ni(2+) contacts are provided by His-136, His-138, and Lys-219. Lys-219 is modified (N6-carboxylysine). His-221 is a substrate binding site. Ni(2+)-binding residues include His-248 and His-274. Residue His-322 is the Proton donor of the active site. Asp-362 contacts Ni(2+).

This sequence belongs to the metallo-dependent hydrolases superfamily. Urease alpha subunit family. As to quaternary structure, heterotrimer of UreA (gamma), UreB (beta) and UreC (alpha) subunits. Three heterotrimers associate to form the active enzyme. It depends on Ni cation as a cofactor. Carboxylation allows a single lysine to coordinate two nickel ions.

The protein resides in the cytoplasm. It catalyses the reaction urea + 2 H2O + H(+) = hydrogencarbonate + 2 NH4(+). Its pathway is nitrogen metabolism; urea degradation; CO(2) and NH(3) from urea (urease route): step 1/1. The chain is Urease subunit alpha from Parasynechococcus marenigrum (strain WH8102).